A 1623-amino-acid polypeptide reads, in one-letter code: RING finger protein 17 (1623 aa).

Residues M1–S22 form a disordered region. An RING-type zinc finger spans residues C32–E75. K234 is modified (N6-acetyllysine). Tudor domains lie at C726–A784, K962–M1021, and F1228–P1285. The segment at N1438–E1462 is disordered. Residues D1479–Y1539 form the Tudor 4 domain.

Interacts with MXD1, MXD3, MXD4, MXI1 and PIWIL1. Self-associates. Testis specific.

It is found in the cytoplasm. The protein resides in the nucleus. In terms of biological role, seems to be involved in regulation of transcriptional activity of MYC. In vitro, inhibits DNA-binding activity of Mad-MAX heterodimers. Can recruit Mad transcriptional repressors (MXD1, MXD3, MXD4 and MXI1) to the cytoplasm. May be involved in spermiogenesis. The polypeptide is RING finger protein 17 (RNF17) (Homo sapiens (Human)).